Reading from the N-terminus, the 63-residue chain is Sarcotoxin-1B (63 aa).

The first 23 residues, 1–23 (MNFNKVFIFVALILAVFAGQSQA), serve as a signal peptide directing secretion. Position 62 is an arginine amide (Arg-62).

It belongs to the cecropin family.

It localises to the secreted. Functionally, sarcotoxins, which are potent bactericidal proteins, are produced in response to injury. They are cytotoxic to both Gram-positive and Gram-negative bacteria. This is Sarcotoxin-1B from Sarcophaga peregrina (Flesh fly).